The following is a 632-amino-acid chain: Gamma-aminobutyric acid receptor subunit theta (632 aa).

The signal sequence occupies residues 1-21 (MGIRGMLRAAVILLLIRTWLA). The Extracellular portion of the chain corresponds to 22-268 (EGNYPSPIPK…FQVQREVNSY (247 aa)). Residue N127 is glycosylated (N-linked (GlcNAc...) asparagine). C183 and C197 form a disulfide bridge. Residues 269-289 (LVQVYWPTVLTTITSWISFWM) form a helical membrane-spanning segment. Over 290 to 297 (NYDSSAAR) the chain is Cytoplasmic. Residues 298-315 (VTIGLTSMLILTTIDSHL) form a helical membrane-spanning segment. The Extracellular portion of the chain corresponds to 316–326 (RDKLPNISCIK). The helical transmembrane segment at 327–347 (AIDIYILVCLFFVFLSLLEYV) threads the bilayer. Over 348–611 (YINYLFYSRG…DYVPKVDKWS (264 aa)) the chain is Cytoplasmic. 2 disordered regions span residues 410 to 458 (SPES…STSE) and 491 to 523 (HGVT…LHHG). The span at 413-425 (SLGSLTSTSEQAQ) shows a compositional bias: polar residues. Residues 426–439 (LATSESLSPLTSLS) show a composition bias toward low complexity. Residues 448–458 (ESLSDLPSTSE) show a composition bias toward polar residues. Basic and acidic residues predominate over residues 491–511 (HGVTHDHEDSNESLSSDERHG). Residues 612 to 632 (RFLFPLAFGLFNIVYWVYHMY) traverse the membrane as a helical segment.

The protein belongs to the ligand-gated ion channel (TC 1.A.9) family. Gamma-aminobutyric acid receptor (TC 1.A.9.5) subfamily. GABRQ sub-subfamily. As to quaternary structure, heteropentamer, formed by a combination of alpha (GABRA1-6), beta (GABRB1-3), gamma (GABRG1-3), delta (GABRD), epsilon (GABRE), rho (GABRR1-3), pi (GABRP) and theta (GABRQ) chains, each subunit exhibiting distinct physiological and pharmacological properties. Expressed in brain.

It is found in the postsynaptic cell membrane. The protein resides in the cell membrane. It carries out the reaction chloride(in) = chloride(out). With respect to regulation, potentiated by etomidate, propofol, pregnanolone and pentobarbital. Theta subunit of the heteropentameric ligand-gated chloride channel gated by gamma-aminobutyric acid (GABA), a major inhibitory neurotransmitter in the brain. GABA-gated chloride channels, also named GABA(A) receptors (GABAAR), consist of five subunits arranged around a central pore and contain GABA active binding site(s) located at the alpha and beta subunit interfaces. When activated by GABA, GABAARs selectively allow the flow of chloride anions across the cell membrane down their electrochemical gradient. This is Gamma-aminobutyric acid receptor subunit theta from Homo sapiens (Human).